Consider the following 189-residue polypeptide: uncharacterized protein (189 aa).

The protein belongs to the mimivirus R457/R459 family.

It localises to the virion. This is an uncharacterized protein from Acanthamoeba polyphaga mimivirus (APMV).